The sequence spans 110 residues: Class I hydrophobin Po.HYD (110 aa).

Residues 1-27 (MFSKATLFFTTVSRYRDTQAPIPTGQT) form the signal peptide. Disulfide bonds link C35/C91, C42/C85, C43/C75, and C92/C105.

It belongs to the fungal hydrophobin family. As to quaternary structure, self-assembles to form functional amyloid fibrils called rodlets. Self-assembly into fibrillar rodlets occurs spontaneously at hydrophobic:hydrophilic interfaces and the rodlets further associate laterally to form amphipathic monolayers.

The protein localises to the secreted. Its subcellular location is the cell wall. Its function is as follows. Aerial growth, conidiation, and dispersal of filamentous fungi in the environment rely upon a capability of their secreting small amphipathic proteins called hydrophobins (HPBs) with low sequence identity. Class I can self-assemble into an outermost layer of rodlet bundles on aerial cell surfaces, conferring cellular hydrophobicity that supports fungal growth, development and dispersal; whereas Class II form highly ordered films at water-air interfaces through intermolecular interactions but contribute nothing to the rodlet structure. The chain is Class I hydrophobin Po.HYD from Pleurotus ostreatus (Oyster mushroom).